The primary structure comprises 427 residues: O-methyltransferase sol2 (427 aa).

Residue Asp-281 coordinates S-adenosyl-L-methionine. The active-site Proton acceptor is the His-327.

It belongs to the class I-like SAM-binding methyltransferase superfamily. Cation-independent O-methyltransferase family. COMT subfamily.

It functions in the pathway phytotoxin biosynthesis. Functionally, O-methyltransferase; part of the gene cluster that mediates the biosynthesis of the phytotoxin solanapyrone, a causal agent of early blight disease of potato and tomato. The prosolanapyrone synthase sol1 is a polyketide synthase that produces the octaketide desmethylprosolanapyrone I via sequential condensations of 7 malonyl-CoA units with one acetyl-CoA unit, and one methylation step. The octaketide backbone is further methylated by the sol2 O-methyltransferase to yield prosolanapyrone I. Prosolanapyrone I is hydroxylated to prosolanapyrone II by the cytochrome P450 monooxygenase sol6. The solanapyrone synthase sol5 then catalyzes the oxidation of prosolanapyrone II and the subsequent Diels Alder cycloisomerization of the product prosolanapyrone III to solanapyrones A and D. Solanapyrones A and D are then converted into solanapyrones B and E, respectively, by the sol3 dehydrogenase. In Alternaria solani, this protein is O-methyltransferase sol2 (sol2).